Consider the following 306-residue polypeptide: tRNA-cytidine(32) 2-sulfurtransferase (306 aa).

The tract at residues 1–25 (MSAVISLPDPQPRAARDPRVAEREQ) is disordered. Basic and acidic residues predominate over residues 14-25 (AARDPRVAEREQ). Positions 57–62 (SGGKDS) match the PP-loop motif motif. 3 residues coordinate [4Fe-4S] cluster: C132, C135, and C223. Residues 286 to 306 (AHAWLAGSPADADADPETPTV) are disordered. The segment covering 297-306 (ADADPETPTV) has biased composition (acidic residues).

It belongs to the TtcA family. Homodimer. Mg(2+) serves as cofactor. It depends on [4Fe-4S] cluster as a cofactor.

It is found in the cytoplasm. It carries out the reaction cytidine(32) in tRNA + S-sulfanyl-L-cysteinyl-[cysteine desulfurase] + AH2 + ATP = 2-thiocytidine(32) in tRNA + L-cysteinyl-[cysteine desulfurase] + A + AMP + diphosphate + H(+). It functions in the pathway tRNA modification. Its function is as follows. Catalyzes the ATP-dependent 2-thiolation of cytidine in position 32 of tRNA, to form 2-thiocytidine (s(2)C32). The sulfur atoms are provided by the cysteine/cysteine desulfurase (IscS) system. In Stenotrophomonas maltophilia (strain K279a), this protein is tRNA-cytidine(32) 2-sulfurtransferase.